We begin with the raw amino-acid sequence, 357 residues long: COP9 signalosome complex subunit 5a (357 aa).

Met1 bears the N-acetylmethionine mark. In terms of domain architecture, MPN spans 59-196 (VHISALALLK…IGAFRTYPEG (138 aa)). Zn(2+)-binding residues include His142, His144, and Asp155. Residues 142–155 (HSHPGYGCWLSGID) carry the JAMM motif motif. Residues 338-357 (ARQSKKSADDSSDPEPMITS) are disordered.

It belongs to the peptidase M67A family. CSN5 subfamily. Component of the CSN complex, probably composed of CSN1, CSN2, CSN3, CSN4, CSN5 (CSN5A or CSN5B), CSN6 (CSN6A or CSN6B), CSN7 and CSN8. CSN5A or CSN5B are present within distinct CSN complexes each containing only one copy of CSN5. Interacts with itself. In the complex, it is located in the center and probably interacts directly with CSN4 and CSN6A or CSN6B. Present also in subcomplex forms which inculdes CSN3. Also exists as monomeric form. Interacts with CYT1 in vitro, but not in planta. Requires a divalent metal cation as cofactor. As to expression, ubiquitously expressed. Highly expressed in flowers and roots. Expressed at lower level in seedlings and siliques.

The protein resides in the cytoplasm. It is found in the nucleus. In terms of biological role, probable protease subunit of the COP9 signalosome complex (CSN), a complex involved in various cellular and developmental processes such as photomorphogenesis and auxin and jasmonate responses. The CSN complex is an essential regulator of the ubiquitin (Ubl) conjugation pathway by mediating the deneddylation of the cullin subunits of the SCF-type E3 ligase complexes, leading to decrease the Ubl ligase activity of SCF. In the complex, it probably acts as the catalytic center that mediates the cleavage of Nedd8 from cullins. It however has no metalloprotease activity by itself and requires the other subunits of the CSN complex. The CSN complex is involved in repression of photomorphogenesis in darkness by regulating the activity of COP1-containing Ubl ligase complexes. The complex is also required for degradation of PSIAA6 by regulating the activity of the Ubl ligase SCF-TIR complex. Involved in CSN's deneddylation/derubylation activity. Required for the deneddylation of all cullins. Essential for the structural integrity of the CSN holocomplex. This is COP9 signalosome complex subunit 5a from Arabidopsis thaliana (Mouse-ear cress).